The sequence spans 180 residues: MSRVGKLPVAIPNGVTVTVTPDNVVTVKGPKGELAKAMSNKINIAVEDNSVVVTRDNDHKDVRALHGLTRALINNMVTGVNEGYVKTLELVGVGYRAQLQGKKLVLSLGFSHPVEMEAVSGVEFEVEGGTKVKVKGIDKELVGAVAADIRKWRKPEPYKGKGIKYENEVIRRKEGKTGKK.

It belongs to the universal ribosomal protein uL6 family. Part of the 50S ribosomal subunit.

Its function is as follows. This protein binds to the 23S rRNA, and is important in its secondary structure. It is located near the subunit interface in the base of the L7/L12 stalk, and near the tRNA binding site of the peptidyltransferase center. In Clostridium botulinum (strain Langeland / NCTC 10281 / Type F), this protein is Large ribosomal subunit protein uL6.